Consider the following 381-residue polypeptide: cAMP-dependent protein kinase type I-alpha regulatory subunit (381 aa).

The residue at position 1 (Met1) is an N-acetylmethionine. An N-acetylalanine; in cAMP-dependent protein kinase type I-alpha regulatory subunit, N-terminally processed modification is found at Ala2. A dimerization and phosphorylation region spans residues 2–136; the sequence is ASGSMATSEE…ALAKAIEKNV (135 aa). The residue at position 3 (Ser3) is a Phosphoserine. Positions 73–96 are disordered; it reads IRTDSREDEISPPPPNPVVKGRRR. Thr75 carries the post-translational modification Phosphothreonine. A phosphoserine mark is found at Ser77 and Ser83. The Pseudophosphorylation motif signature appears at 96-100; sequence RRGAI. Ser101 bears the Phosphoserine mark. 3',5'-cyclic AMP contacts are provided by residues 137 to 254, Glu202, Arg211, 255 to 381, Glu326, and Arg335; these read LFSH…SKVS and ILES…SLSV. Ser258 bears the Phosphoserine mark.

Belongs to the cAMP-dependent kinase regulatory chain family. As to quaternary structure, the inactive holoenzyme is composed of two regulatory chains and two catalytic chains. Activation by cAMP releases the two active catalytic monomers and the regulatory dimer. Interacts with PRKACA and PRKACB. PRKAR1A also interacts with RFC2; the complex may be involved in cell survival. Interacts with AKAP4. Interacts with RARA; the interaction occurs in the presence of cAMP or FSH and regulates RARA transcriptional activity. Interacts with the phosphorylated form of PJA2. Interacts with PRKX; regulates this cAMP-dependent protein kinase. Interacts with CBFA2T3. Interacts with smAKAP; this interaction may target PRKAR1A to the plasma membrane. Interacts with AICDA. The pseudophosphorylation site binds to the substrate-binding region of the catalytic chain, resulting in the inhibition of its activity.

It localises to the cell membrane. Its function is as follows. Regulatory subunit of the cAMP-dependent protein kinases involved in cAMP signaling in cells. This chain is cAMP-dependent protein kinase type I-alpha regulatory subunit (Prkar1a), found in Mus musculus (Mouse).